The following is a 320-amino-acid chain: ATPase H(+)-transporting accessory protein 2 (320 aa).

The N-terminal stretch at 1-17 is a signal peptide; it reads MLRVFVIFSLFIAAINA. The Lumenal segment spans residues 18–277; the sequence is SGEFTVLNRP…YGSDYPVIFN (260 aa). Residues 278–298 traverse the membrane as a helical segment; sequence IILWFMVVFGLSLLAICYAIA. Residues 299–320 are Cytoplasmic-facing; sequence AMDPGRDSIIYRMTSTRIKKDN. Residues 317–320 carry the Mediates retrograde transport to the ER motif; that stretch reads KKDN.

Interacts with fz and fz2. Interacts (via N-terminus) with stan. As an accessory component of the multisubunit proton-transporting vacuolar (V)-ATPase protein pump, might interacts with VhaAC45. Post-translationally, proteolytically cleaved by a furin-like convertase in the trans-Golgi network to generate N- and C-terminal fragments. Cleavage is reduced in the fat body.

It localises to the cell membrane. It is found in the endoplasmic reticulum membrane. Its subcellular location is the vesicle. The protein resides in the apical cell membrane. The protein localises to the golgi apparatus membrane. It localises to the secreted. Multifunctional protein which functions as a transmembrane receptor in the planar cell polarity (PCP) and is involved in the assembly of the proton-transporting vacuolar (V)-ATPase protein pump. As transmembrane receptor mediates fz/PCP signaling through interaction with fz and stabilizes asymmetric PCP domains through its interaction with stan. Also mediates Wnt/beta-cat signaling through interaction with fz/fz2. Probably by controlling the assembly of the V-ATPase pump and thus the acidification of the endo-lysosomal system, plays a role in many neuronal processes including synapse morphology and synaptic transmission. Functionally, stabilizes asymmetric Planar Cell Polarity (PCP) domains through its interaction with stan. This Drosophila melanogaster (Fruit fly) protein is ATPase H(+)-transporting accessory protein 2.